The primary structure comprises 432 residues: Pachytene checkpoint protein 2 homolog (432 aa).

The residue at position 1 (methionine 1) is an N-acetylmethionine. Glycine 179–threonine 186 provides a ligand contact to ATP.

It belongs to the AAA ATPase family. PCH2 subfamily. In terms of assembly, specifically interacts with the ligand binding domain of the thyroid receptor (TR). This interaction does not require the presence of thyroid hormone for its interaction. Interacts with proteasome subunit PSMA8; to participate in meiosis progression during spermatogenesis. In terms of tissue distribution, widely expressed, including in testis.

Plays a key role in chromosome recombination and chromosome structure development during meiosis. Required at early steps in meiotic recombination that leads to non-crossovers pathways. Also needed for efficient completion of homologous synapsis by influencing crossover distribution along the chromosomes affecting both crossovers and non-crossovers pathways. Also required for development of higher-order chromosome structures and is needed for synaptonemal-complex formation. In males, required for efficient synapsis of the sex chromosomes and for sex body formation. Promotes early steps of the DNA double-strand breaks (DSBs) repair process upstream of the assembly of RAD51 complexes. Required for depletion of HORMAD1 and HORMAD2 from synapsed chromosomes. Plays a role in mitotic spindle assembly checkpoint (SAC) activation. The sequence is that of Pachytene checkpoint protein 2 homolog (Trip13) from Mus musculus (Mouse).